The chain runs to 269 residues: HTH-type transcriptional activator ArnR (269 aa).

Over 1-218 (MTKSLFDVLK…LLRLTNSYTL (218 aa)) the chain is Cytoplasmic. Positions 39–62 (TTEISQTINTSRKSIIDAIRKLVD) form a DNA-binding region, H-T-H motif. A helical membrane pass occupies residues 219–239 (EMANVKVMGFILISLPLLMYF). The Extracellular portion of the chain corresponds to 240–242 (RDQ). Residues 243 to 263 (LGLIELPWLYAVIFLALLSVF) form a helical membrane-spanning segment. The Cytoplasmic segment spans residues 264-269 (AQILSR).

Its subcellular location is the cell membrane. Involved in regulation of archaellar gene expression. Activates flaB transcription upon nutrient starvation by acting on the flaB promoter. In Sulfolobus acidocaldarius (strain ATCC 33909 / DSM 639 / JCM 8929 / NBRC 15157 / NCIMB 11770), this protein is HTH-type transcriptional activator ArnR.